We begin with the raw amino-acid sequence, 448 residues long: UPF0053 protein sll0260 (448 aa).

Residues 2–203 form the CNNM transmembrane domain; that stretch reads FSSSVELELF…AQAGMIDEAE (202 aa). 4 consecutive transmembrane segments (helical) span residues 11-31, 62-82, 106-126, and 142-162; these read FFIF…IAIV, FLSA…AVGG, LSIS…GELV, and VAPA…LLGV. CBS domains lie at 222–281 and 286–345; these read MTPR…GQKI and IVQP…NDDE.

Belongs to the UPF0053 family.

The protein localises to the cell membrane. The chain is UPF0053 protein sll0260 from Synechocystis sp. (strain ATCC 27184 / PCC 6803 / Kazusa).